The primary structure comprises 249 residues: Chitooligosaccharide deacetylase (249 aa).

The Mg(2+) site is built by H61 and H125.

This sequence belongs to the YdjC deacetylase family. ChbG subfamily. In terms of assembly, homodimer. It depends on Mg(2+) as a cofactor.

The protein localises to the cytoplasm. It catalyses the reaction N,N'-diacetylchitobiose + H2O = N-acetyl-beta-D-glucosaminyl-(1-&gt;4)-D-glucosamine + acetate. The catalysed reaction is diacetylchitobiose-6'-phosphate + H2O = N'-monoacetylchitobiose-6'-phosphate + acetate. It participates in glycan degradation; chitin degradation. Its function is as follows. Involved in the degradation of chitin. ChbG is essential for growth on the acetylated chitooligosaccharides chitobiose and chitotriose but is dispensable for growth on cellobiose and chitosan dimer, the deacetylated form of chitobiose. Deacetylation of chitobiose-6-P and chitotriose-6-P is necessary for both the activation of the chb promoter by the regulatory protein ChbR and the hydrolysis of phosphorylated beta-glucosides by the phospho-beta-glucosidase ChbF. Catalyzes the removal of only one acetyl group from chitobiose-6-P to yield monoacetylchitobiose-6-P, the inducer of ChbR and the substrate of ChbF. The polypeptide is Chitooligosaccharide deacetylase (Escherichia coli O7:K1 (strain IAI39 / ExPEC)).